The primary structure comprises 249 residues: DNA repair protein RecO (249 aa).

The protein belongs to the RecO family.

Functionally, involved in DNA repair and RecF pathway recombination. This is DNA repair protein RecO from Lawsonia intracellularis (strain PHE/MN1-00).